The sequence spans 949 residues: MESFAGSCEIVEEKDAVRLAKHSSRYCMSPLGSSKDMEQRPALKSGYQGSMEYDIDQLFQSITIKPSPRRVMGSSFHHLETSASAGTSRSTSPSNKGAMKKPFPMGTPRSPRVGPSDSISLKQALRDLCISKASEMASQKRLSKSAAASPRVSEADRIKTLYRQVLNESAGKPGLPVDKGKSLVEISLTPVVDIPSSSQSVPQRYDVLETEPSNFISEPSQAEILLHVLGNGSGIKTVGYGMLETVSLCKSNKSGSCLSSGSGDYEIEIDENHTSPPHMVIEDQLVEIDKHVTSLPSCSGSKVDTEELDKSIVSSARVKSEPTALSSGLKGKLDNFPGSGTEKSKLVSKVTRNIPRPKPRPKKKILLKKKLKIVVNSATKMVEEVDTSLEPSASQLLCQKCHCAVKSTSTENHPPSNTSHTTDKNVSIEADQESLASPRLIRIVKCNKEASKGSSDSCEVSDSGEAVIVMKQEVSPSNYSGKGDADEQIRANPTSSEKFDFSLSSKNSLGDYSSSTSMSEESNLSRFSCGNKPHMSMDVRWEAVKHVKLQYGSLGLRHFNLLKKLGCGDIGTVYLAELVGTNCLFAIKVMDNEFLARRKKTPRAQAERAILKMLDHPFLPTLYAQFTSDNLSCLVMEYCPGGDLHVLRQKQLSRCFSEPATRFYVAEILLALEYLHMLGVIYRDLKPENILVREDGHIMLTDFDLSLRCAVNPTLLRSTSPPEKDPARMSGPYSTSNCIQPLCIEPSCRVPCFSPRLLSTQARNQKPRKPKRPDLLTQQFRSLPQLVAEPTEARSNSFVGTHEYLAPEIIKGEGHGAAVDWWTFGVLLYELLYGKTPFKGYDNEETLSNVVYQNLKFPDSPLVSFQAKELIRRLLVKDPESRLGSEKGAAEIKRHPFFEGLNWALIRCAIPPELPDIYDNGATEATSPEGNNRYLECKAIGDHLEFELF.

Disordered regions lie at residues 79–116 (LETSASAGTSRSTSPSNKGAMKKPFPMGTPRSPRVGPS), 323–344 (TALSSGLKGKLDNFPGSGTEKS), 407–426 (STSTENHPPSNTSHTTDKNV), and 495–525 (SSEKFDFSLSSKNSLGDYSSSTSMSEESNLS). Residues 81–94 (TSASAGTSRSTSPS) show a composition bias toward low complexity. 2 stretches are compositionally biased toward polar residues: residues 407–420 (STSTENHPPSNTSH) and 495–512 (SSEKFDFSLSSKNSLGDY). The span at 513–525 (SSSTSMSEESNLS) shows a compositional bias: low complexity. The 340-residue stretch at 559–898 (FNLLKKLGCG…AAEIKRHPFF (340 aa)) folds into the Protein kinase domain. Residues 565 to 573 (LGCGDIGTV) and lysine 588 each bind ATP. Residue aspartate 684 is the Proton acceptor of the active site.

The protein belongs to the protein kinase superfamily. Ser/Thr protein kinase family. As to quaternary structure, interacts with KCBP, PERK8, PERK9, PERK10 and PERK13.

It catalyses the reaction L-seryl-[protein] + ATP = O-phospho-L-seryl-[protein] + ADP + H(+). The enzyme catalyses L-threonyl-[protein] + ATP = O-phospho-L-threonyl-[protein] + ADP + H(+). Its function is as follows. Serine/threonine-protein kinase that could be involved in the negative regulation of root growth. The protein is Serine/threonine-protein kinase KIPK2 of Arabidopsis thaliana (Mouse-ear cress).